A 20-amino-acid chain; its full sequence is Phospholipase A2 D5 (20 aa).

Ca(2+) is required as a cofactor. Post-translationally, contains seven disulfide bonds. Expressed by the venom gland.

The protein localises to the secreted. The catalysed reaction is a 1,2-diacyl-sn-glycero-3-phosphocholine + H2O = a 1-acyl-sn-glycero-3-phosphocholine + a fatty acid + H(+). Functionally, PLA2 catalyzes the calcium-dependent hydrolysis of the 2-acyl groups in 3-sn-phosphoglycerides. This is Phospholipase A2 D5 from Micrurus pyrrhocryptus (Coral snake).